The chain runs to 400 residues: Acetate kinase (400 aa).

Asn-10 serves as a coordination point for Mg(2+). Lys-17 contacts ATP. Arg-91 is a binding site for substrate. The active-site Proton donor/acceptor is the Asp-150. Residues 210 to 214, 285 to 287, and 333 to 337 contribute to the ATP site; these read HLGNG, DCR, and GIGEN. A Mg(2+)-binding site is contributed by Glu-387.

This sequence belongs to the acetokinase family. In terms of assembly, homodimer. Mg(2+) serves as cofactor. Requires Mn(2+) as cofactor.

It localises to the cytoplasm. It carries out the reaction acetate + ATP = acetyl phosphate + ADP. It functions in the pathway metabolic intermediate biosynthesis; acetyl-CoA biosynthesis; acetyl-CoA from acetate: step 1/2. Functionally, catalyzes the formation of acetyl phosphate from acetate and ATP. Can also catalyze the reverse reaction. This Proteus mirabilis (strain HI4320) protein is Acetate kinase.